The following is a 713-amino-acid chain: Forkhead box protein P2 (713 aa).

Polar residues predominate over residues 1-28; it reads MMQESATETISNSSMNQNGMSTLSSQLD. Disordered stretches follow at residues 1–45 and 279–337; these read MMQE…SEVS and DNGI…TGAS. Over residues 290–303 the composition is skewed to low complexity; that stretch reads TTNNSSSTTSSTTS. The segment covering 313–322 has biased composition (polar residues); that stretch reads SIVNGQSSVL. A compositionally biased stretch (basic and acidic residues) spans 324–335; that stretch reads ARRDSSSHEETG. Residues 344 to 369 form a C2H2-type zinc finger; that stretch reads GVCKWPGCESICEDFGQFLKHLNNEH. The segment at 386-407 is leucine-zipper; it reads VQQLEIQLSKERERLQAMMTHL. Residues 420-424 form a CTBP1-binding region; sequence PLNLV. Positions 436 to 457 are enriched in low complexity; sequence TSPQSLPQTPTTPTAPVTPITQ. Residues 436-463 are disordered; that stretch reads TSPQSLPQTPTTPTAPVTPITQGPSVIT. A DNA-binding region (fork-head) is located at residues 502–592; the sequence is RPPFTYATLI…SQKITGSPTL (91 aa). Disordered stretches follow at residues 647-666 and 676-713; these read LDHI…QPHI and VIAE…EDLE. The span at 697–713 shows a compositional bias: acidic residues; sequence LEDDREIEEEPLSEDLE.

In terms of assembly, forms homodimers and heterodimers with FOXP1 and FOXP4. Dimerization is required for DNA-binding. Interacts with CTBP1. Interacts with FOXP1. Interacts with TBR1. Interacts with ZMYM2.

The protein localises to the nucleus. In terms of biological role, transcriptional repressor that may play a role in the specification and differentiation of lung epithelium. May also play a role in developing neural, gastrointestinal and cardiovascular tissues. Can act with CTBP1 to synergistically repress transcription but CTPBP1 is not essential. Plays a role in synapse formation by regulating SRPX2 levels. In Hylobates lar (Lar gibbon), this protein is Forkhead box protein P2 (FOXP2).